We begin with the raw amino-acid sequence, 512 residues long: Krueppel-like factor 11 (512 aa).

Residues 109–128 (PQSPDLVEPSTRTPVSPQVT) are disordered. Over residues 118–128 (STRTPVSPQVT) the composition is skewed to polar residues. At Ser124 the chain carries Phosphoserine. 3 consecutive C2H2-type zinc fingers follow at residues 394–418 (YVCS…LRTH), 424–448 (FNCS…RRTH), and 454–476 (FVCP…ARRH).

It belongs to the Sp1 C2H2-type zinc-finger protein family. Interacts with SIN3A. In terms of tissue distribution, ubiquitous. Higher expression in erythroid cells.

The protein localises to the nucleus. In terms of biological role, transcription factor. Activates the epsilon- and gamma-globin gene promoters and, to a much lower degree, the beta-globin gene and represses promoters containing SP1-like binding inhibiting cell growth. Represses transcription of SMAD7 which enhances TGF-beta signaling. Induces apoptosis. The chain is Krueppel-like factor 11 (KLF11) from Homo sapiens (Human).